Reading from the N-terminus, the 384-residue chain is 8-amino-7-oxononanoate synthase (384 aa).

R21 contacts substrate. 108-109 is a binding site for pyridoxal 5'-phosphate; sequence GF. H133 lines the substrate pocket. The pyridoxal 5'-phosphate site is built by S179, H207, and T233. At K236 the chain carries N6-(pyridoxal phosphate)lysine. A substrate-binding site is contributed by T352.

This sequence belongs to the class-II pyridoxal-phosphate-dependent aminotransferase family. BioF subfamily. Homodimer. The cofactor is pyridoxal 5'-phosphate.

The enzyme catalyses 6-carboxyhexanoyl-[ACP] + L-alanine + H(+) = (8S)-8-amino-7-oxononanoate + holo-[ACP] + CO2. The protein operates within cofactor biosynthesis; biotin biosynthesis. Functionally, catalyzes the decarboxylative condensation of pimeloyl-[acyl-carrier protein] and L-alanine to produce 8-amino-7-oxononanoate (AON), [acyl-carrier protein], and carbon dioxide. The chain is 8-amino-7-oxononanoate synthase from Citrobacter koseri (strain ATCC BAA-895 / CDC 4225-83 / SGSC4696).